A 227-amino-acid polypeptide reads, in one-letter code: UPF0173 metal-dependent hydrolase BCG9842_B0515 (227 aa).

It belongs to the UPF0173 family.

The sequence is that of UPF0173 metal-dependent hydrolase BCG9842_B0515 from Bacillus cereus (strain G9842).